Consider the following 383-residue polypeptide: Xylose/arabinose import ATP-binding protein XacK (383 aa).

One can recognise an ABC transporter domain in the interval 4–240 (LTLDDVTKVY…PNNLFVAGFI (237 aa)). Residue 41–48 (GPSGCGKS) coordinates ATP.

It belongs to the ABC transporter superfamily. Carbohydrate uptake transporter-1 (CUT1) (TC 3.A.1.1) family. In terms of assembly, the complex is composed of two ATP-binding proteins (XacJ and XacK), two transmembrane proteins (XacH and XacI) and a solute-binding protein (XacG).

It is found in the cell membrane. It catalyses the reaction D-xylose(out) + ATP + H2O = D-xylose(in) + ADP + phosphate + H(+). The enzyme catalyses L-arabinose(out) + ATP + H2O = L-arabinose(in) + ADP + phosphate + H(+). Functionally, part of the ABC transporter complex XacGHIJK involved in the uptake of xylose and arabinose. Responsible for energy coupling to the transport system. This Haloferax volcanii (strain ATCC 29605 / DSM 3757 / JCM 8879 / NBRC 14742 / NCIMB 2012 / VKM B-1768 / DS2) (Halobacterium volcanii) protein is Xylose/arabinose import ATP-binding protein XacK.